A 409-amino-acid chain; its full sequence is tRNA(Met) cytidine acetate ligase (409 aa).

Residues 7-20 (VVEY…HLYH), Gly102, Asn169, and Arg194 contribute to the ATP site.

It belongs to the TmcAL family.

The protein resides in the cytoplasm. It carries out the reaction cytidine(34) in elongator tRNA(Met) + acetate + ATP = N(4)-acetylcytidine(34) in elongator tRNA(Met) + AMP + diphosphate. In terms of biological role, catalyzes the formation of N(4)-acetylcytidine (ac(4)C) at the wobble position of elongator tRNA(Met), using acetate and ATP as substrates. First activates an acetate ion to form acetyladenylate (Ac-AMP) and then transfers the acetyl group to tRNA to form ac(4)C34. In Clostridium botulinum (strain Okra / Type B1), this protein is tRNA(Met) cytidine acetate ligase.